A 53-amino-acid chain; its full sequence is UPF0391 membrane protein Acid_3618 (53 aa).

The next 2 membrane-spanning stretches (helical) occupy residues 6–26 and 28–48; these read LVFL…LAGA and VGIA…AFLM.

This sequence belongs to the UPF0391 family.

It localises to the cell membrane. This Solibacter usitatus (strain Ellin6076) protein is UPF0391 membrane protein Acid_3618.